A 53-amino-acid chain; its full sequence is Conotoxin Bu27 (53 aa).

The propeptide occupies 1–12 (ASDGRNAVVHER). At P14 the chain carries 4-hydroxyproline. 4-carboxyglutamate is present on E15. O-linked (HexNAc...) threonine glycans are attached at residues T19 and T21. Residues P29, P34, P35, P43, P44, and P48 each carry the 4-hydroxyproline modification. Position 48 is a proline amide (P48). The propeptide occupies 49–53 (GRRND).

It belongs to the conotoxin A superfamily. Post-translationally, contains 3 disulfide bonds. Expressed by the venom duct.

Its subcellular location is the secreted. Its function is as follows. Probable neurotoxin with ion channel inhibitor activity. The sequence is that of Conotoxin Bu27 from Conus bullatus (Bubble cone).